The sequence spans 260 residues: Histidine-binding periplasmic protein (260 aa).

An N-terminal signal peptide occupies residues 1-22; that stretch reads MKKLALSLSLVLAFSSATAAFA. Cysteines 60 and 67 form a disulfide. Positions 91, 92, 94, 99, 143, and 183 each coordinate L-histidine.

This sequence belongs to the bacterial solute-binding protein 3 family. As to quaternary structure, the complex is composed of two ATP-binding proteins (HisP), two transmembrane proteins (HisM and HisQ) and a solute-binding protein (HisJ).

It localises to the periplasm. Functionally, part of the ABC transporter complex HisPMQJ involved in histidine transport. Binds histidine. Interacts with HisQMP and stimulates ATPase activity of HisP, which results in histidine translocation. May have some additional function(s) in translocation that is independent of the stimulation of ATP hydrolysis. This is Histidine-binding periplasmic protein from Salmonella typhimurium (strain LT2 / SGSC1412 / ATCC 700720).